The sequence spans 411 residues: Adenylosuccinate synthetase (411 aa).

Residues 11 to 17 (GDEGKGK) and 39 to 41 (GHT) each bind GTP. Catalysis depends on Asp12, which acts as the Proton acceptor. Mg(2+)-binding residues include Asp12 and Gly39. Residues 12–15 (DEGK), 37–40 (NAGH), Thr121, Arg135, Gln215, Thr230, and Arg294 contribute to the IMP site. His40 acts as the Proton donor in catalysis. 290-296 (TTTKRPR) is a substrate binding site. GTP is bound by residues Arg296, 322-324 (KLD), and 400-402 (STS).

It belongs to the adenylosuccinate synthetase family. Homodimer. It depends on Mg(2+) as a cofactor.

Its subcellular location is the cytoplasm. It catalyses the reaction IMP + L-aspartate + GTP = N(6)-(1,2-dicarboxyethyl)-AMP + GDP + phosphate + 2 H(+). Its pathway is purine metabolism; AMP biosynthesis via de novo pathway; AMP from IMP: step 1/2. In terms of biological role, plays an important role in the de novo pathway of purine nucleotide biosynthesis. Catalyzes the first committed step in the biosynthesis of AMP from IMP. This Helicobacter pylori (strain J99 / ATCC 700824) (Campylobacter pylori J99) protein is Adenylosuccinate synthetase.